The primary structure comprises 1165 residues: DNA-directed RNA polymerase subunit beta (1165 aa).

It belongs to the RNA polymerase beta chain family. In terms of assembly, the RNAP catalytic core consists of 2 alpha, 1 beta, 1 beta' and 1 omega subunit. When a sigma factor is associated with the core the holoenzyme is formed, which can initiate transcription.

It carries out the reaction RNA(n) + a ribonucleoside 5'-triphosphate = RNA(n+1) + diphosphate. Functionally, DNA-dependent RNA polymerase catalyzes the transcription of DNA into RNA using the four ribonucleoside triphosphates as substrates. The sequence is that of DNA-directed RNA polymerase subunit beta from Corynebacterium glutamicum (strain ATCC 13032 / DSM 20300 / JCM 1318 / BCRC 11384 / CCUG 27702 / LMG 3730 / NBRC 12168 / NCIMB 10025 / NRRL B-2784 / 534).